A 485-amino-acid polypeptide reads, in one-letter code: E3 ubiquitin-protein ligase TRIM58 (485 aa).

The segment at 15-59 adopts an RING-type zinc-finger fold; sequence CSVCLDFLQEPISVDCGHSFCLRCISEFCEKSDSAQGVYACPQCR. Residues 90–131 form a B box-type zinc finger; that stretch reads AGSRQCARHGEDLSHFCEEDQTMLCWVCDTSPEHRSHRTETL. 4 residues coordinate Zn(2+): C95, H98, C117, and H123. Residues 192-241 adopt a coiled-coil conformation; sequence LAQEEQLQLRRLEEEERATLQRLRDSRNRLAQQNKALKELAEELEERSQR. One can recognise a B30.2/SPRY domain in the interval 271–466; that stretch reads DLKTVCRIPG…LPPMTEAAPG (196 aa).

The protein belongs to the TRIM/RBCC family. As to expression, expressed in erythroblasts.

The enzyme catalyses S-ubiquitinyl-[E2 ubiquitin-conjugating enzyme]-L-cysteine + [acceptor protein]-L-lysine = [E2 ubiquitin-conjugating enzyme]-L-cysteine + N(6)-ubiquitinyl-[acceptor protein]-L-lysine.. It participates in protein modification; protein ubiquitination. In terms of biological role, E3 ubiquitin ligase induced during late erythropoiesis. Directly binds and ubiquitinates the intermediate chain of the microtubule motor dynein (DYNC1LI1/DYNC1LI2), stimulating the degradation of the dynein holoprotein complex. May participate in the erythroblast enucleation process through regulation of nuclear polarization. The sequence is that of E3 ubiquitin-protein ligase TRIM58 (Trim58) from Mus musculus (Mouse).